The sequence spans 466 residues: Putative proline/betaine transporter (466 aa).

12 consecutive transmembrane segments (helical) span residues V20–A42, F63–I83, V91–P111, I116–G136, I164–L184, S191–L211, I247–Y267, V285–A305, V313–L332, F337–Y354, V377–L397, and L405–L425.

It belongs to the major facilitator superfamily. Metabolite:H+ Symporter (MHS) family (TC 2.A.1.6) family.

The protein resides in the cell membrane. Its function is as follows. May be a proton symporter involved in the uptake of osmolytes such as proline and glycine betaine. The polypeptide is Putative proline/betaine transporter (proP) (Staphylococcus aureus (strain Mu3 / ATCC 700698)).